The chain runs to 312 residues: Olfactory receptor OR51C1 (312 aa).

Topologically, residues 1–26 (MGSNITSTSIIFLLTGVPGLEAFHTW) are extracellular. Residues 27 to 47 (ISIPFCFLSVTALLGNSLILF) form a helical membrane-spanning segment. The Cytoplasmic portion of the chain corresponds to 48–66 (ATITQPSLHEPMYYFLSML). A helical membrane pass occupies residues 67-87 (SATDLGLSISTLVTMLSIFWF). Residues 88 to 99 (NVREISFNACLS) are Extracellular-facing. Residues Cys97 and Cys179 are joined by a disulfide bond. Residues 100–120 (HMFFIKFFTVMESSVLLAMAF) traverse the membrane as a helical segment. The Cytoplasmic portion of the chain corresponds to 121–143 (DRFVAVSNPLRYAMILTDSRIAQ). Residues 144–164 (IGVASVIRGLLMLTPMVALLI) form a helical membrane-spanning segment. Residues 165 to 201 (RLSYCHSQVLHHSYCYHPDVMKLSCTDTRINSAVGLT) lie on the Extracellular side of the membrane. The chain crosses the membrane as a helical span at residues 202 to 222 (AMFSTVGVDLLLILLSYVLII). Over 223-240 (RTVLSVASPEERKETFST) the chain is Cytoplasmic. Residues 241 to 261 (CVSHIVAFAIYYIPLISLSIV) traverse the membrane as a helical segment. Residues 262-273 (HRFGKQAPAYVH) lie on the Extracellular side of the membrane. Residues 274-294 (TMIANTYLLISPLMNPVIYSV) form a helical membrane-spanning segment. Over 295–312 (KTKQIRRAVIKILHSKET) the chain is Cytoplasmic.

This sequence belongs to the G-protein coupled receptor 1 family.

The protein resides in the membrane. Odorant receptor. The chain is Olfactory receptor OR51C1 from Homo sapiens (Human).